A 473-amino-acid polypeptide reads, in one-letter code: Pentatricopeptide repeat-containing protein At3g60050 (473 aa).

9 PPR repeats span residues 148–182, 183–217, 218–252, 253–287, 288–322, 323–357, 358–392, 393–427, and 428–462; these read TVNS…GFPT, TART…NYRP, FKHS…GFSP, DVLT…GFSP, DSYT…GIDP, SVLH…GCRP, DVVC…GQLP, NVFT…GCNP, and NFVV…GHYV.

It belongs to the PPR family. P subfamily.

This is Pentatricopeptide repeat-containing protein At3g60050 from Arabidopsis thaliana (Mouse-ear cress).